We begin with the raw amino-acid sequence, 354 residues long: Homer protein homolog 2 (354 aa).

One can recognise a WH1 domain in the interval 1-110; the sequence is MGEQPIFTTR…EKFQEVKEAA (110 aa). Residues 92-122 adopt a coiled-coil conformation; it reads SEQQLTKFAEKFQEVKEAAKIAKDKTQEKIE. Over residues 112–122 the composition is skewed to basic and acidic residues; it reads IAKDKTQEKIE. Positions 112–166 are disordered; that stretch reads IAKDKTQEKIETSSNHSQESGRETPSSTQASSVNGTDDEKASHAGPANTHLKSEN. Over residues 123–146 the composition is skewed to polar residues; the sequence is TSSNHSQESGRETPSSTQASSVNG. Residues 160–329 adopt a coiled-coil conformation; it reads THLKSENDKL…RHLKVELKSF (170 aa).

The protein belongs to the Homer family. In terms of assembly, forms coiled-coil structures that mediate homo- and heteromultimerization. Interacts with NFATC2; interaction is reduced by AKT activation. Interacts with NFATC1 and NFATC4. Interacts with DAGLA (via PPXXF motif); this interaction is required for the cell membrane localization of DAGLA.

It is found in the cytoplasm. Its subcellular location is the cell membrane. The protein localises to the postsynaptic density. It localises to the synapse. The protein resides in the cell projection. It is found in the stereocilium. Its function is as follows. Postsynaptic density scaffolding protein. Binds and cross-links cytoplasmic regions of GRM1, GRM5, ITPR1, DNM3, RYR1, RYR2, SHANK1 and SHANK3. By physically linking GRM1 and GRM5 with ER-associated ITPR1 receptors, it aids the coupling of surface receptors to intracellular calcium release. May also couple GRM1 to PI3 kinase through its interaction with AGAP2. Isoforms can be differently regulated and may play an important role in maintaining the plasticity at glutamatergic synapses. Required for normal hearing. Negatively regulates T cell activation by inhibiting the calcineurin-NFAT pathway. Acts by competing with calcineurin/PPP3CA for NFAT protein binding, hence preventing NFAT activation by PPP3CA. The polypeptide is Homer protein homolog 2 (Homo sapiens (Human)).